The following is a 473-amino-acid chain: Sulfate adenylyltransferase subunit 1 (473 aa).

Positions 19–238 (KTLLKFLTCG…IKIKNSISSE (220 aa)) constitute a tr-type G domain. Positions 28-35 (GSVDDGKS) are G1. A GTP-binding site is contributed by 28–35 (GSVDDGKS). A G2 region spans residues 86–90 (GITID). The G3 stretch occupies residues 107–110 (DTPG). GTP-binding positions include 107 to 111 (DTPGH) and 162 to 165 (NKMD). Residues 162-165 (NKMD) are G4. The tract at residues 200–202 (SAL) is G5.

The protein belongs to the TRAFAC class translation factor GTPase superfamily. Classic translation factor GTPase family. CysN/NodQ subfamily. Heterodimer composed of CysD, the smaller subunit, and CysN.

The catalysed reaction is sulfate + ATP + H(+) = adenosine 5'-phosphosulfate + diphosphate. It participates in sulfur metabolism; hydrogen sulfide biosynthesis; sulfite from sulfate: step 1/3. With CysD forms the ATP sulfurylase (ATPS) that catalyzes the adenylation of sulfate producing adenosine 5'-phosphosulfate (APS) and diphosphate, the first enzymatic step in sulfur assimilation pathway. APS synthesis involves the formation of a high-energy phosphoric-sulfuric acid anhydride bond driven by GTP hydrolysis by CysN coupled to ATP hydrolysis by CysD. The polypeptide is Sulfate adenylyltransferase subunit 1 (Buchnera aphidicola subsp. Acyrthosiphon pisum (strain 5A)).